Here is a 395-residue protein sequence, read N- to C-terminus: Phosphoglycerate kinase (395 aa).

Residues 21–23 (DLN), arginine 36, 59–62 (HLGR), arginine 113, and arginine 146 contribute to the substrate site. ATP is bound by residues lysine 197, glutamate 324, and 350–353 (GGDT).

Belongs to the phosphoglycerate kinase family. In terms of assembly, monomer.

The protein resides in the cytoplasm. It carries out the reaction (2R)-3-phosphoglycerate + ATP = (2R)-3-phospho-glyceroyl phosphate + ADP. Its pathway is carbohydrate degradation; glycolysis; pyruvate from D-glyceraldehyde 3-phosphate: step 2/5. The sequence is that of Phosphoglycerate kinase from Acinetobacter baumannii (strain AB307-0294).